Consider the following 317-residue polypeptide: uncharacterized protein (317 aa).

Basic and acidic residues predominate over residues 1-11; that stretch reads MASAGAERRPG. The tract at residues 1 to 164 is disordered; that stretch reads MASAGAERRP…KAKKRKSLGA (164 aa). A compositionally biased stretch (polar residues) spans 19–34; it reads GQGQLTEEPGSAQTSE. 2 stretches are compositionally biased toward basic and acidic residues: residues 47–58 and 71–92; these read HEARGTQSEDQR and EGPK…ERGP. Composition is skewed to basic residues over residues 100 to 110 and 151 to 161; these read RPRHGPKRKPV and KQHKKAKKRKS.

This is an uncharacterized protein from Homo sapiens (Human).